A 344-amino-acid chain; its full sequence is Anthranilate phosphoribosyltransferase (344 aa).

Residues glycine 81, 84–85 (GD), serine 89, 91–94 (NIST), 109–117 (KHGNRALSS), and alanine 121 contribute to the 5-phospho-alpha-D-ribose 1-diphosphate site. Glycine 81 contributes to the anthranilate binding site. Position 93 (serine 93) interacts with Mg(2+). Asparagine 112 lines the anthranilate pocket. Anthranilate is bound at residue arginine 167. Residues aspartate 226 and glutamate 227 each coordinate Mg(2+).

It belongs to the anthranilate phosphoribosyltransferase family. As to quaternary structure, homodimer. The cofactor is Mg(2+).

The enzyme catalyses N-(5-phospho-beta-D-ribosyl)anthranilate + diphosphate = 5-phospho-alpha-D-ribose 1-diphosphate + anthranilate. It functions in the pathway amino-acid biosynthesis; L-tryptophan biosynthesis; L-tryptophan from chorismate: step 2/5. In terms of biological role, catalyzes the transfer of the phosphoribosyl group of 5-phosphorylribose-1-pyrophosphate (PRPP) to anthranilate to yield N-(5'-phosphoribosyl)-anthranilate (PRA). This is Anthranilate phosphoribosyltransferase from Xanthobacter autotrophicus (strain ATCC BAA-1158 / Py2).